We begin with the raw amino-acid sequence, 616 residues long: MSTIARKKGVGAVLWDYLTTVDHKKIAHLYLISGGFFFLLGGLEALFIRIQLAKPNNDFLVGGLYNEVLTMHGTTMIFLAAMPLVFAFMNAVVPLQIGARDVAFPFLNALGFWMFFFGGLFLNCSWFLGGAPDAGWTSYASLSLDSKAHHGIDFYTLGLQISGFGTIMGAINFLVTIINMRAPGMTFMRMPMFTWATFVTSALILFAFPPLTVGLIFMMMDRLFGGNFFNPAAGGNTIIWEHLFWVFGHPEVYILVLPAFGIFSEIFATFSRKRLFGYSSMVFATVLIAFLGFMVWAHHMFTVGMGPIANAIFAVATMTIAVPTGVKIFNWLFTMWGGSIKFTTPMHYAVAFIPSFVMGGVTGVMLASAAADYQYHDSYFVVAHFHYVIVGGVVFALLAGTHYWWPKMFGRMLNETLGKITFWLFFIGFHLTFFIQHFLGLTGMPRRVFTYLPHQGWETGNLISTIGAFFIAAATVILLINIVVTTAKGEKVPGDAWGDGRTLEWAIASPPPVYNFAQTPLVRGLDAFWLEKMEGKKELTPAEPLGDIHMPNSSFLPFVIAFGLFVAAFGFTYHNDAGWGLPVAILGLLITLGSMFLRSVIDDHGFHIHKEEVLEL.

A helical transmembrane segment spans residues 28–48 (HLYLISGGFFFLLGGLEALFI). H72 serves as a coordination point for Fe(II)-heme a. Helical transmembrane passes span 75 to 95 (TMIFLAAMPLVFAFMNAVVPL), 102 to 122 (VAFPFLNALGFWMFFFGGLFL), 158 to 178 (GLQISGFGTIMGAINFLVTII), 198 to 218 (FVTSALILFAFPPLTVGLIFM), 243 to 263 (LFWVFGHPEVYILVLPAFGIF), and 275 to 295 (LFGYSSMVFATVLIAFLGFMV). The Cu cation site is built by H249 and Y253. Positions 249–253 (HPEVY) form a cross-link, 1'-histidyl-3'-tyrosine (His-Tyr). The Cu cation site is built by H298 and H299. The next 7 membrane-spanning stretches (helical) occupy residues 303–323 (VGMGPIANAIFAVATMTIAVP), 349–369 (AVAFIPSFVMGGVTGVMLASA), 380–400 (FVVAHFHYVIVGGVVFALLAG), 420–440 (ITFWLFFIGFHLTFFIQHFLG), 463–483 (ISTIGAFFIAAATVILLINIV), 553–573 (SSFLPFVIAFGLFVAAFGFTY), and 577–597 (AGWGLPVAILGLLITLGSMFL). H384 serves as a coordination point for Fe(II)-heme o. H384 serves as a coordination point for heme a3. Residue H386 participates in Fe(II)-heme a binding.

Belongs to the heme-copper respiratory oxidase family. The cofactor is Cu(2+). Heme serves as cofactor.

The protein resides in the cell membrane. It catalyses the reaction 4 Fe(II)-[cytochrome c] + O2 + 8 H(+)(in) = 4 Fe(III)-[cytochrome c] + 2 H2O + 4 H(+)(out). It participates in energy metabolism; oxidative phosphorylation. Cytochrome c oxidase is the component of the respiratory chain that catalyzes the reduction of oxygen to water. Subunits 1-3 form the functional core of the enzyme complex. Co I is the catalytic subunit of the enzyme. Electrons originating in cytochrome c are transferred via the copper A center of subunit 2 and heme a of subunit 1 to the bimetallic center formed by heme a3 and copper B. This cytochrome c oxidase shows proton pump activity across the membrane in addition to the electron transfer. This Bacillus sp. (strain PS3) protein is Cytochrome c oxidase subunit 1 (ctaD).